The following is a 426-amino-acid chain: Glutamate-1-semialdehyde 2,1-aminomutase (426 aa).

Lys265 carries the N6-(pyridoxal phosphate)lysine modification.

Belongs to the class-III pyridoxal-phosphate-dependent aminotransferase family. HemL subfamily. Homodimer. Requires pyridoxal 5'-phosphate as cofactor.

Its subcellular location is the cytoplasm. The enzyme catalyses (S)-4-amino-5-oxopentanoate = 5-aminolevulinate. Its pathway is porphyrin-containing compound metabolism; protoporphyrin-IX biosynthesis; 5-aminolevulinate from L-glutamyl-tRNA(Glu): step 2/2. This chain is Glutamate-1-semialdehyde 2,1-aminomutase, found in Aliarcobacter butzleri (strain RM4018) (Arcobacter butzleri).